The chain runs to 299 residues: 4-diphosphocytidyl-2-C-methyl-D-erythritol kinase (299 aa).

Residue K16 is part of the active site. 97–107 (PVASGIGGGSA) provides a ligand contact to ATP. Residue D140 is part of the active site.

This sequence belongs to the GHMP kinase family. IspE subfamily.

The catalysed reaction is 4-CDP-2-C-methyl-D-erythritol + ATP = 4-CDP-2-C-methyl-D-erythritol 2-phosphate + ADP + H(+). Its pathway is isoprenoid biosynthesis; isopentenyl diphosphate biosynthesis via DXP pathway; isopentenyl diphosphate from 1-deoxy-D-xylulose 5-phosphate: step 3/6. Its function is as follows. Catalyzes the phosphorylation of the position 2 hydroxy group of 4-diphosphocytidyl-2C-methyl-D-erythritol. This is 4-diphosphocytidyl-2-C-methyl-D-erythritol kinase from Roseobacter denitrificans (strain ATCC 33942 / OCh 114) (Erythrobacter sp. (strain OCh 114)).